Here is a 554-residue protein sequence, read N- to C-terminus: Nuclear division defective protein 1 (554 aa).

2 disordered regions span residues 1–31 (MDRD…NNAD) and 98–117 (IQQQ…ALGS). The span at 98-113 (IQQQQQQQQQQQQQQQ) shows a compositional bias: low complexity. Thr-319 carries the phosphothreonine; by CDC28 modification. 2 disordered regions span residues 410–475 (PTPN…GKKP) and 493–554 (SSSS…FNSQ). Residues 411–427 (TPNCNSLHSTTTGTSAL) are compositionally biased toward polar residues. Residues 448 to 465 (SSSNTVSFKSKSGNNNSK) show a composition bias toward low complexity. The segment covering 466 to 475 (GRIKKNGKKP) has biased composition (basic residues). A compositionally biased stretch (low complexity) spans 493-513 (SSSSLSSSLNASSSAGNSNSN). Residues 515–524 (TKKRASKLKR) show a composition bias toward basic residues. A compositionally biased stretch (low complexity) spans 525–536 (SQSLLSDSGSKS). Positions 539-554 (RKSCNSKSNGNLFNSQ) are enriched in polar residues.

Forms an activator complex with FKH2. In terms of processing, phosphorylation of Thr-319 by CDC28 is required for the interaction with FKH2 and recruitment to promoters.

The protein resides in the cytoplasm. It is found in the nucleus. In terms of biological role, transcription activator involved in G2/M transcription through its association with FKH2. The chain is Nuclear division defective protein 1 (NDD1) from Saccharomyces cerevisiae (strain ATCC 204508 / S288c) (Baker's yeast).